Here is a 316-residue protein sequence, read N- to C-terminus: Exonuclease DPD1, chloroplastic/mitochondrial (316 aa).

A chloroplast and mitochondrion-targeting transit peptide spans 1 to 63; it reads MCISISQVSR…NVSTTTQGSR (63 aa). The Exonuclease domain maps to 112-282; the sequence is IVSDLETTGL…SDVLLLSKVF (171 aa). Residues D115 and E117 each coordinate Mg(2+). Residue H269 is the Proton donor/acceptor of the active site. Residue D274 coordinates Mg(2+).

It belongs to the exonuclease superfamily. TREX family. Mg(2+) serves as cofactor. In terms of tissue distribution, highly expressed in mature pollen grains. Detected in flowers, senescing leaves and roots.

It localises to the plastid. The protein resides in the chloroplast. The protein localises to the mitochondrion. Inhibited by free nucleotide diphosphates (NDPs). In terms of biological role, exonuclease required for organelle DNA degradation during pollen development. Plays non-essential roles in maternal inheritance. May be part of the DNA salvage machinery. The protein is Exonuclease DPD1, chloroplastic/mitochondrial of Arabidopsis thaliana (Mouse-ear cress).